A 262-amino-acid polypeptide reads, in one-letter code: Adenosylcobinamide-GDP ribazoletransferase (262 aa).

Helical transmembrane passes span 43-63 (YFGLVGLLVGLLSAIIFWLTQ), 66-86 (LPAGVSVLLSMLTGILLTGGF), 120-140 (GALALIMVLLLKWQLLVELAL), 146-166 (AGSAMIVAHTVSRVVAASLIF), 191-211 (LFILIASGVLVLLVLKGIAAL), and 242-262 (AAQQICEIVCYFVLLVVGGIL).

This sequence belongs to the CobS family. The cofactor is Mg(2+).

The protein resides in the cell inner membrane. It carries out the reaction alpha-ribazole + adenosylcob(III)inamide-GDP = adenosylcob(III)alamin + GMP + H(+). It catalyses the reaction alpha-ribazole 5'-phosphate + adenosylcob(III)inamide-GDP = adenosylcob(III)alamin 5'-phosphate + GMP + H(+). Its pathway is cofactor biosynthesis; adenosylcobalamin biosynthesis; adenosylcobalamin from cob(II)yrinate a,c-diamide: step 7/7. Its function is as follows. Joins adenosylcobinamide-GDP and alpha-ribazole to generate adenosylcobalamin (Ado-cobalamin). Also synthesizes adenosylcobalamin 5'-phosphate from adenosylcobinamide-GDP and alpha-ribazole 5'-phosphate. This Shewanella oneidensis (strain ATCC 700550 / JCM 31522 / CIP 106686 / LMG 19005 / NCIMB 14063 / MR-1) protein is Adenosylcobinamide-GDP ribazoletransferase.